The primary structure comprises 505 residues: Endoglucanase 5 (505 aa).

Positions 1-31 (MWMRRNQIVRKLTLGVVTTVLGMSLSFSALS) are cleaved as a signal peptide. Positions 32-334 (ATPVETHGQL…REQIRAGANL (303 aa)) are catalytic. Residues His64, 68-69 (WF), Tyr95, and His130 each bind substrate. Catalysis depends on Glu168, which acts as the Proton donor. Tyr230 serves as a coordination point for substrate. Residue Glu256 is the Nucleophile of the active site. Substrate is bound by residues 262–263 (AS), Trp290, and 295–297 (KSE). The tract at residues 332–355 (ANLGGGDTPTTPTEPTNPGNGTTG) is disordered. A linker region spans residues 335–352 (GGGDTPTTPTEPTNPGNG). Over residues 339–355 (TPTTPTEPTNPGNGTTG) the composition is skewed to low complexity. A CBM3 domain is found at 353–505 (TTGDVVLQYR…KGTLVWGVEP (153 aa)).

Belongs to the glycosyl hydrolase 5 (cellulase A) family.

It is found in the secreted. The enzyme catalyses Endohydrolysis of (1-&gt;4)-beta-D-glucosidic linkages in cellulose, lichenin and cereal beta-D-glucans.. Its function is as follows. Endoglucanase with some exoglucanase activity. In Pectobacterium carotovorum subsp. carotovorum (Erwinia carotovora subsp. carotovora), this protein is Endoglucanase 5 (celV).